The following is a 317-amino-acid chain: mRNA 3'-end-processing protein yth-1 (317 aa).

The tract at residues 1 to 20 (MATTTQTTTNSLPSGAGGPQ) is disordered. 5 consecutive C3H1-type zinc fingers follow at residues 51–78 (PADRPICKAYASGNCPLKSHCPERHVTA), 93–120 (GFGSLVCKHWLRGLCKKGESCEFLHEYN), 121–149 (LRKMPECNFFVRNGYCSNGDECLYLHIDP), 150–177 (LSRLPPCPHYERGFCPLGPRCDKKHFRR), and 179–202 (LCLYYLAGFCPDGKGCKEGAHPRW). Over residues 202-217 (WTADKDMEKPRAKGEG) the composition is skewed to basic and acidic residues. The disordered stretch occupies residues 202–317 (WTADKDMEKP…GRGGFRGKGH (116 aa)). A compositionally biased stretch (low complexity) spans 223–237 (QQQQQQQQQQHMGDA). Residues 253–288 (YMDRERERDRDNREREMMMQGRDRDGGGHDRHKDRF) are compositionally biased toward basic and acidic residues. A compositionally biased stretch (gly residues) spans 289–301 (GGGGGGGGGGRGR). Over residues 302 to 317 (GGWRGRGRGGFRGKGH) the composition is skewed to basic residues.

This sequence belongs to the CPSF4/YTH1 family.

It localises to the nucleus. Functionally, component of the cleavage factor I (CF I) involved in pre-mRNA 3'-end processing. This Neurospora crassa (strain ATCC 24698 / 74-OR23-1A / CBS 708.71 / DSM 1257 / FGSC 987) protein is mRNA 3'-end-processing protein yth-1 (yth-1).